Reading from the N-terminus, the 224-residue chain is Small ribosomal subunit protein uS3 (224 aa).

The 69-residue stretch at 39 to 107 folds into the KH type-2 domain; it reads VRKYIQNALA…PVHINIEEIR (69 aa).

This sequence belongs to the universal ribosomal protein uS3 family. In terms of assembly, part of the 30S ribosomal subunit. Forms a tight complex with proteins S10 and S14.

Functionally, binds the lower part of the 30S subunit head. Binds mRNA in the 70S ribosome, positioning it for translation. The sequence is that of Small ribosomal subunit protein uS3 from Saccharophagus degradans (strain 2-40 / ATCC 43961 / DSM 17024).